We begin with the raw amino-acid sequence, 149 residues long: Large ribosomal subunit protein bL9 (149 aa).

This sequence belongs to the bacterial ribosomal protein bL9 family.

Its function is as follows. Binds to the 23S rRNA. The polypeptide is Large ribosomal subunit protein bL9 (Aliivibrio salmonicida (strain LFI1238) (Vibrio salmonicida (strain LFI1238))).